We begin with the raw amino-acid sequence, 127 residues long: Large ribosomal subunit protein bL19 (127 aa).

It belongs to the bacterial ribosomal protein bL19 family.

In terms of biological role, this protein is located at the 30S-50S ribosomal subunit interface and may play a role in the structure and function of the aminoacyl-tRNA binding site. The polypeptide is Large ribosomal subunit protein bL19 (Jannaschia sp. (strain CCS1)).